Here is a 160-residue protein sequence, read N- to C-terminus: Phosphopantetheine adenylyltransferase (160 aa).

Residue Thr-10 participates in substrate binding. ATP contacts are provided by residues 10–11 (TF) and His-18. Positions 42, 74, and 88 each coordinate substrate. Residues 89–91 (GLR), Glu-99, and 124–130 (LSFLSSS) contribute to the ATP site.

Belongs to the bacterial CoaD family. As to quaternary structure, homohexamer. Mg(2+) is required as a cofactor.

Its subcellular location is the cytoplasm. It catalyses the reaction (R)-4'-phosphopantetheine + ATP + H(+) = 3'-dephospho-CoA + diphosphate. The protein operates within cofactor biosynthesis; coenzyme A biosynthesis; CoA from (R)-pantothenate: step 4/5. Its function is as follows. Reversibly transfers an adenylyl group from ATP to 4'-phosphopantetheine, yielding dephospho-CoA (dPCoA) and pyrophosphate. The chain is Phosphopantetheine adenylyltransferase from Photorhabdus laumondii subsp. laumondii (strain DSM 15139 / CIP 105565 / TT01) (Photorhabdus luminescens subsp. laumondii).